The primary structure comprises 385 residues: Aspartate carbamoyltransferase 2, chloroplastic (385 aa).

A chloroplast-targeting transit peptide spans 1-30 (MTASSSLFSCSMHMEVLTPKISKWPKNFVS). Carbamoyl phosphate is bound by residues R131 and T132. UMP is bound by residues R131 and T132. K161 contacts L-aspartate. R182, H210, and Q213 together coordinate carbamoyl phosphate. Positions 182 and 210 each coordinate UMP. 2 residues coordinate UMP: R243 and R305. 2 residues coordinate L-aspartate: R243 and R305. Carbamoyl phosphate is bound by residues L345 and P346.

Belongs to the aspartate/ornithine carbamoyltransferase superfamily. ATCase family. As to quaternary structure, homotrimer.

It is found in the plastid. It localises to the chloroplast. It catalyses the reaction carbamoyl phosphate + L-aspartate = N-carbamoyl-L-aspartate + phosphate + H(+). The protein operates within pyrimidine metabolism; UMP biosynthesis via de novo pathway; (S)-dihydroorotate from bicarbonate: step 2/3. Its activity is regulated as follows. Feedback inhibited by UMP. Its function is as follows. Catalyzes the condensation of carbamoyl phosphate and aspartate to form carbamoyl aspartate and inorganic phosphate, the committed step in the de novo pyrimidine nucleotide biosynthesis pathway. The polypeptide is Aspartate carbamoyltransferase 2, chloroplastic (PYRB2) (Pisum sativum (Garden pea)).